Consider the following 524-residue polypeptide: Phytoene desaturase (neurosporene-forming) (524 aa).

Residue Val12–Gly45 coordinates FAD. The tract at residues Pro500–Gln524 is disordered. The span at Thr507 to Gln524 shows a compositional bias: low complexity.

The protein belongs to the carotenoid/retinoid oxidoreductase family. The cofactor is FAD.

It catalyses the reaction 15-cis-phytoene + 3 A = all-trans-neurosporene + 3 AH2. The protein operates within carotenoid biosynthesis. Is inhibited by diphenylamine (DPA). Is also slightly inhibited by NAD, NADP or ATP in the presence of FAD. Its function is as follows. Converts phytoene into all-trans-neurosporene as the major product, via the intermediary of phytofluene and zeta-carotene, by the introduction of three double bonds. Both intermediates, phytofluene and zeta-carotene, can be used as substrates and converted to neurosporene. 1,2-epoxy phytoene is also a suitable substrate whereas the C30 diapophytoene is not. The sequence is that of Phytoene desaturase (neurosporene-forming) (crtI) from Rhodobacter capsulatus (strain ATCC BAA-309 / NBRC 16581 / SB1003).